The primary structure comprises 254 residues: Zinc transporter GufA (254 aa).

The next 7 membrane-spanning stretches (helical) occupy residues 4 to 24 (GLVASLLAGTATGLGALPVLV), 74 to 94 (VAAGVLLGGLFLRVWHDLMPH), 112 to 132 (ALLFVLAMTLHNFPEGLAVGV), 143 to 163 (LSVALGIGAQNIPEGLVVALA), 176 to 196 (FLALLTGMVEPVGALFGVLAL), 198 to 218 (LSSALLPWGLAFAGGAMLYVI), and 234 to 254 (EATTGLMWGFVLALVLDMSLG). Positions 123, 126, 152, 153, 156, and 185 each coordinate Zn(2+).

It belongs to the ZIP transporter (TC 2.A.5) family. Homodimer.

The protein resides in the cell inner membrane. Its function is as follows. Mediates the uptake of Zn(2+). The polypeptide is Zinc transporter GufA (gufA) (Myxococcus xanthus).